The following is a 407-amino-acid chain: MSGNIAVDPDKLEQLANDVVTELTDMENKYKDLHVELGQMILQCDPRYSSCFSGVGDAWSSGKALVTKLSDNEIFIRKTGDKFVEQDDILRKLYNAYDKYGTMTSLTALMLTQGKYYGLGLTKFVKQPSGLHTAQHSKLLLDISRAVDSSRYQKAARVLLNPKYLLKKTNRPFSDLVHKKFTKYFPQDTVDFSNSVRSYTKGFLNEAGVRSTLKDVGKTGLRFAKGNAITATLITGATETFGAGVKIAENYAKYQDKPEVLKRENAKAVGNAVNNTIFVAGGATAGAVIGGAIGSFAGPVGTVLLGAAGSYIGGVVGEQIAKYTAGFAEKAALKLKEPIHAVVDTAKKGLESAGKVVKSVNDGIDAANKSIHKGIDSAKKGMEKAKKTADSLIHGATHFLKGKFSFG.

A coiled-coil region spans residues 10–37 (DKLEQLANDVVTELTDMENKYKDLHVEL).

This is an uncharacterized protein from Bacillus subtilis (strain 168).